A 574-amino-acid chain; its full sequence is Optineurin (574 aa).

Residues 1–33 (MSHQPLSCLTEKGDSPTETTGNGPPTLAHPNLD) form a disordered region. Residues 38-170 (HELLQQMREL…VSELQLKLNS (133 aa)) are a coiled coil. Residues 58-209 (MKLNNQAMKG…GPIRTDSIDT (152 aa)) are interaction with Rab8. Positions 176–181 (DSFVEI) match the LIR motif. The residue at position 177 (Ser-177) is a Phosphoserine; by TBK1. Ser-198 carries the post-translational modification Phosphoserine. Positions 233–496 (CLREGNQKVE…ALQLAVLLKD (264 aa)) form a coiled coil. Positions 262-286 (AKDRSETETQTEEHKEQEKEEEKSP) are enriched in basic and acidic residues. Residues 262-292 (AKDRSETETQTEEHKEQEKEEEKSPETVGSE) form a disordered region. Ser-336 bears the Phosphoserine mark. Positions 405 to 574 (KRRESEKVDK…LLIHVTDCII (170 aa)) are interaction with HD. The segment at 406–515 (RRESEKVDKV…RQSLMEMQSR (110 aa)) is interaction with MYO6. Positions 468-473 (DFHAER) match the UBAN motif. Residue Ser-521 is modified to Phosphoserine. A CCHC NOA-type zinc finger spans residues 544 to 574 (QQNIPIHSCPKCGEVLPDIDTLLIHVTDCII). Cys-552, Cys-555, His-568, and Cys-572 together coordinate Zn(2+).

In terms of assembly, self-associates. Interacts with HD. Interacts with GTF3A. Interacts with MYO6. Interacts (via UBAN) with ubiquitinated TFRC. Interacts with GTP-bound Rab8 (RAB8A and/or RAB8B). Interacts with TBC1D17. Interacts with TBK1. Interacts with TRAF3. Binds to linear ubiquitin chains. Interacts with LC3 family members MAP1LC3A, MAP1LC3B, GABARAP, GABARAPL1 and GABARAPL2; OPTN phosphorylation increases the association (at least with MAP1LC3B). Interacts with RAB12; the interaction may be indirect. Interacts with TBK1; this interaction leads to the Golgi localization of TBK1 and its subsequent activation. Interacts with palmitoyltransferase ZDHHC17/HIP14; the interaction does not lead to palmitoylation of OPTN. Interacts with CYLD. Interacts with TOM1; the interaction is indirect and is mediated by MYO6, which acts as a bridge between TOM1 and OPTN. Interacts with USP12; the interaction is independent of USP12 deubiquitinase activity and may be involved in regulation of autophagic flux. In terms of processing, phosphorylated by TBK1, leading to restrict bacterial proliferation in case of infection. As to expression, present in aqueous humor of the eye (at protein level). Expressed in trabecular meshwork and astrocytes.

Its subcellular location is the cytoplasm. It localises to the perinuclear region. It is found in the golgi apparatus. The protein resides in the trans-Golgi network. The protein localises to the cytoplasmic vesicle. Its subcellular location is the autophagosome. It localises to the recycling endosome. Its function is as follows. Plays an important role in the maintenance of the Golgi complex, in membrane trafficking, in exocytosis, through its interaction with myosin VI and Rab8. Links myosin VI to the Golgi complex and plays an important role in Golgi ribbon formation. Negatively regulates the induction of IFNB in response to RNA virus infection. Plays a neuroprotective role in the eye and optic nerve. Probably part of the TNF-alpha signaling pathway that can shift the equilibrium toward induction of cell death. May act by regulating membrane trafficking and cellular morphogenesis via a complex that contains Rab8 and huntingtin (HD). Mediates the interaction of Rab8 with the probable GTPase-activating protein TBC1D17 during Rab8-mediated endocytic trafficking, such as that of transferrin receptor (TFRC/TfR); regulates Rab8 recruitment to tubules emanating from the endocytic recycling compartment. Autophagy receptor that interacts directly with both the cargo to become degraded and an autophagy modifier of the MAP1 LC3 family; targets ubiquitin-coated bacteria (xenophagy) and appears to function in the same pathway as SQSTM1 and CALCOCO2/NDP52. This is Optineurin (OPTN) from Sus scrofa (Pig).